The chain runs to 206 residues: Small ribosomal subunit protein uS4 (206 aa).

Residues 96 to 156 (QRLDNVVYRM…EKSKTQARII (61 aa)) enclose the S4 RNA-binding domain.

Belongs to the universal ribosomal protein uS4 family. In terms of assembly, part of the 30S ribosomal subunit. Contacts protein S5. The interaction surface between S4 and S5 is involved in control of translational fidelity.

Functionally, one of the primary rRNA binding proteins, it binds directly to 16S rRNA where it nucleates assembly of the body of the 30S subunit. Its function is as follows. With S5 and S12 plays an important role in translational accuracy. The chain is Small ribosomal subunit protein uS4 from Pseudoalteromonas translucida (strain TAC 125).